Here is a 363-residue protein sequence, read N- to C-terminus: Des-methyl DIF-1 methyltransferase A (363 aa).

Residues Gly195, Asp221, Asp250, Leu251, and Lys266 each contribute to the S-adenosyl-L-methionine site. His270 acts as the Proton acceptor in catalysis.

It belongs to the class I-like SAM-binding methyltransferase superfamily. Cation-independent O-methyltransferase family. COMT subfamily.

It carries out the reaction (3,5-dichloro-2,4,6-trihydroxyphenyl)hexan-1-one + S-adenosyl-L-methionine = 1-(3,5-dichloro-2,6-dihydroxy-4-methoxyphenyl)hexan-1-one + S-adenosyl-L-homocysteine + H(+). In terms of biological role, O-methyltransferase; part of the gene cluster that mediates the biosynthesis of DIF-1 (Differentiation Inducing Factor-1), a signal molecule involved in the differentiation of pstO (prestalk-O) cells. The three-step process begins with the formation of (2,4,6-trihydroxyphenyl)-1-hexan-1-one (THPH) by the polyketide synthase StlB. THPH is then dichlorinated by the flavin-dependent halogenase ChlA. The last step of DIF-1 biosynthesis is the O-methylation of dichloro-THPH (or des-methyl-DIF-1) by the methyltransferase DmtA to yield DIF-1. The polypeptide is Des-methyl DIF-1 methyltransferase A (Dictyostelium discoideum (Social amoeba)).